A 469-amino-acid polypeptide reads, in one-letter code: Citrate synthase, mitochondrial (469 aa).

The transit peptide at 1–30 (MSFLSVSRLAPKLLNSKNATYFLVAARNAS) directs the protein to the mitochondrion. Residues His-304 and His-350 contribute to the active site. Arg-359 serves as a coordination point for oxaloacetate. The active site involves Asp-405. Oxaloacetate contacts are provided by Arg-431 and Arg-451.

The protein belongs to the citrate synthase family. In terms of assembly, homodimer.

Its subcellular location is the mitochondrion matrix. The catalysed reaction is oxaloacetate + acetyl-CoA + H2O = citrate + CoA + H(+). It participates in carbohydrate metabolism; tricarboxylic acid cycle; isocitrate from oxaloacetate: step 1/2. Functionally, key enzyme of the Krebs tricarboxylic acid cycle which catalyzes the synthesis of citrate from acetyl coenzyme A and oxaloacetate. This chain is Citrate synthase, mitochondrial (cs), found in Thunnus albacares (Yellowfin tuna).